We begin with the raw amino-acid sequence, 529 residues long: Probable pectinesterase/pectinesterase inhibitor 35 (529 aa).

An N-terminal signal peptide occupies residues 1 to 34; it reads MATTSFSLPNHKFGIKLMLFLVLNLLSLQTSVFA. The tract at residues 36–180 is pectinesterase inhibitor 35; that stretch reads SSNSKFTKIS…TGLLTNSLDM (145 aa). The tract at residues 42–64 is disordered; it reads TKISRHPNSDSSSRTKPSTSSNK. Over residues 50–64 the composition is skewed to low complexity; that stretch reads SDSSSRTKPSTSSNK. Asn-86, Asn-169, and Asn-193 each carry an N-linked (GlcNAc...) asparagine glycan. The pectinesterase 35 stretch occupies residues 228–514; that stretch reads HAVVAADGSG…FTVSGFIDGN (287 aa). 2 residues coordinate substrate: Thr-302 and Gln-332. Residue Asp-355 is the Proton donor; for pectinesterase activity of the active site. Residue Asp-376 is the Nucleophile; for pectinesterase activity of the active site. 2 residues coordinate substrate: Arg-434 and Trp-436.

This sequence in the N-terminal section; belongs to the PMEI family. It in the C-terminal section; belongs to the pectinesterase family. As to expression, expressed in siliques.

It localises to the secreted. The protein localises to the cell wall. It catalyses the reaction [(1-&gt;4)-alpha-D-galacturonosyl methyl ester](n) + n H2O = [(1-&gt;4)-alpha-D-galacturonosyl](n) + n methanol + n H(+). It functions in the pathway glycan metabolism; pectin degradation; 2-dehydro-3-deoxy-D-gluconate from pectin: step 1/5. Its function is as follows. Acts in the modification of cell walls via demethylesterification of cell wall pectin. This chain is Probable pectinesterase/pectinesterase inhibitor 35 (PME35), found in Arabidopsis thaliana (Mouse-ear cress).